We begin with the raw amino-acid sequence, 355 residues long: DNA polymerase IV (355 aa).

The 182-residue stretch at 7–188 folds into the UmuC domain; the sequence is IIHIDMDCFY…LPVRKLFGVG (182 aa). Positions 11 and 106 each coordinate Mg(2+). Residue Glu-107 is part of the active site.

This sequence belongs to the DNA polymerase type-Y family. Monomer. It depends on Mg(2+) as a cofactor.

It localises to the cytoplasm. It catalyses the reaction DNA(n) + a 2'-deoxyribonucleoside 5'-triphosphate = DNA(n+1) + diphosphate. In terms of biological role, poorly processive, error-prone DNA polymerase involved in untargeted mutagenesis. Copies undamaged DNA at stalled replication forks, which arise in vivo from mismatched or misaligned primer ends. These misaligned primers can be extended by PolIV. Exhibits no 3'-5' exonuclease (proofreading) activity. May be involved in translesional synthesis, in conjunction with the beta clamp from PolIII. In Legionella pneumophila (strain Corby), this protein is DNA polymerase IV.